The following is a 339-amino-acid chain: Heat stress transcription factor C-1a (339 aa).

Residues 154–217 (EEEDAAEDVL…LAKLADDPNA (64 aa)) adopt a coiled-coil conformation. The hydrophobic repeat HR-A/B stretch occupies residues 176–212 (LRHEQTAIGEELARMSQRLQATERRPDQLMSFLAKLA). Residues 227 to 248 (AERKRRRQHLPSHEPTVCPLPP) form a disordered region. A Nuclear localization signal motif is present at residues 229–233 (RKRRR).

This sequence belongs to the HSF family. Class C subfamily. As to quaternary structure, homotrimer. Exhibits temperature-dependent phosphorylation.

Its subcellular location is the nucleus. Transcriptional regulator that specifically binds DNA of heat shock promoter elements (HSE). The polypeptide is Heat stress transcription factor C-1a (HSFC1A) (Oryza sativa subsp. japonica (Rice)).